Here is a 224-residue protein sequence, read N- to C-terminus: Cytidylate kinase (224 aa).

11–19 (GPAGAGKST) contributes to the ATP binding site.

It belongs to the cytidylate kinase family. Type 1 subfamily.

Its subcellular location is the cytoplasm. It carries out the reaction CMP + ATP = CDP + ADP. The catalysed reaction is dCMP + ATP = dCDP + ADP. The sequence is that of Cytidylate kinase from Exiguobacterium sp. (strain ATCC BAA-1283 / AT1b).